The sequence spans 123 residues: Small ribosomal subunit protein uS13c (123 aa).

Residues 90–123 form a disordered region; the sequence is GKRHRNSLPVRGQRTRTNARSRRGAKKTVTGKKK. Basic residues predominate over residues 102-123; it reads QRTRTNARSRRGAKKTVTGKKK.

This sequence belongs to the universal ribosomal protein uS13 family. In terms of assembly, part of the 30S ribosomal subunit.

The protein localises to the plastid. It is found in the chloroplast. Located at the top of the head of the 30S subunit, it contacts several helices of the 16S rRNA. The protein is Small ribosomal subunit protein uS13c of Thalassiosira pseudonana (Marine diatom).